A 20-amino-acid polypeptide reads, in one-letter code: Probable cinnamyl alcohol dehydrogenase 1 (20 aa).

It belongs to the zinc-containing alcohol dehydrogenase family. Zn(2+) serves as cofactor.

It carries out the reaction (E)-cinnamyl alcohol + NADP(+) = (E)-cinnamaldehyde + NADPH + H(+). It catalyses the reaction (E)-coniferol + NADP(+) = (E)-coniferaldehyde + NADPH + H(+). The catalysed reaction is (E)-sinapyl alcohol + NADP(+) = (E)-sinapaldehyde + NADPH + H(+). The enzyme catalyses (E)-4-coumaroyl alcohol + NADP(+) = (E)-4-coumaraldehyde + NADPH + H(+). It carries out the reaction (E)-caffeyl alcohol + NADP(+) = (E)-caffeyl aldehyde + NADPH + H(+). It functions in the pathway aromatic compound metabolism; phenylpropanoid biosynthesis. Functionally, involved in lignin biosynthesis. Catalyzes the final step specific for the production of lignin monomers, like coniferyl alcohol, sinapyl alcohol and 4-coumaryl alcohol. The polypeptide is Probable cinnamyl alcohol dehydrogenase 1 (Pseudotsuga menziesii (Douglas-fir)).